The primary structure comprises 115 residues: Pro-neuregulin-4, membrane-bound isoform (115 aa).

The Extracellular portion of the chain corresponds to 1–62 (MPTDHEEPCG…SSIQTKSNLF (62 aa)). The EGF-like domain maps to 5–46 (HEEPCGPSHKSFCLNGGLCYVIPTIPSPFCRCVENYTGARCE). Disulfide bonds link Cys9–Cys23, Cys17–Cys34, and Cys36–Cys45. Asn39 carries N-linked (GlcNAc...) asparagine glycosylation. A helical transmembrane segment spans residues 63-83 (EAFVALAVLVTLIIGAFYFLC). At 84 to 115 (RKGHFQRASSVQYDINLVETSSTSAHHSHEQH) the chain is on the cytoplasmic side.

The protein belongs to the neuregulin family. As to quaternary structure, interacts with ERBB4. Post-translationally, proteolytic cleavage close to the plasma membrane on the external face leads to the release of the soluble growth factor form. In terms of processing, extensive glycosylation precedes the proteolytic cleavage.

It localises to the cell membrane. It is found in the secreted. Low affinity ligand for the ERBB4 tyrosine kinase receptor. Concomitantly recruits ERBB1 and ERBB2 coreceptors, resulting in ligand-stimulated tyrosine phosphorylation and activation of the ERBB receptors. Does not bind to the ERBB1, ERBB2 and ERBB3 receptors. The protein is Pro-neuregulin-4, membrane-bound isoform (NRG4) of Homo sapiens (Human).